Consider the following 258-residue polypeptide: uncharacterized protein (258 aa).

The span at 40–54 (AQKTDTPLDSSSYAV) shows a compositional bias: polar residues. Residues 40 to 63 (AQKTDTPLDSSSYAVTSPEEAPNE) form a disordered region.

This is an uncharacterized protein from Treponema pallidum (strain Nichols).